A 183-amino-acid chain; its full sequence is Ribulose bisphosphate carboxylase small subunit, chloroplastic (183 aa).

Residues 1–59 constitute a chloroplast transit peptide; it reads MASSMISSGTVATVSADRPAPAQARMVAPFNGLKSSSAFPVTRKSNDITSIASNGGRVQ.

It belongs to the RuBisCO small chain family. As to quaternary structure, heterohexadecamer of 8 large and 8 small subunits.

It is found in the plastid. Its subcellular location is the chloroplast. RuBisCO catalyzes two reactions: the carboxylation of D-ribulose 1,5-bisphosphate, the primary event in carbon dioxide fixation, as well as the oxidative fragmentation of the pentose substrate. Both reactions occur simultaneously and in competition at the same active site. Although the small subunit is not catalytic it is essential for maximal activity. The sequence is that of Ribulose bisphosphate carboxylase small subunit, chloroplastic from Pyrus pyrifolia (Chinese pear).